The following is a 426-amino-acid chain: Phosphoribosylamine--glycine ligase (426 aa).

An ATP-grasp domain is found at 109–312 (KEVMEAAGVA…LAGVLNAVAT (204 aa)). 138-193 (LDYFGPMYVVKDDGLAAGKGVVVTADRAEARQHIHLVHAAGNPVLLESFLDGPEVS) lines the ATP pocket. E282 and N284 together coordinate Mg(2+).

This sequence belongs to the GARS family. Mg(2+) serves as cofactor. Mn(2+) is required as a cofactor.

The catalysed reaction is 5-phospho-beta-D-ribosylamine + glycine + ATP = N(1)-(5-phospho-beta-D-ribosyl)glycinamide + ADP + phosphate + H(+). The protein operates within purine metabolism; IMP biosynthesis via de novo pathway; N(1)-(5-phospho-D-ribosyl)glycinamide from 5-phospho-alpha-D-ribose 1-diphosphate: step 2/2. In Corynebacterium ammoniagenes (Brevibacterium ammoniagenes), this protein is Phosphoribosylamine--glycine ligase.